A 261-amino-acid chain; its full sequence is Zinc finger protein 664 (261 aa).

C2H2-type zinc fingers lie at residues 3–25, 31–53, 59–81, 87–109, 115–137, 143–165, 171–193, 199–221, and 227–249; these read YKCP…QKVH, HKCD…WRDH, YKCD…KKIH, YKCY…MRVH, YVCS…QRVH, FKCE…QRVH, YKCY…QRVH, YRCC…QRVH, and FKCD…QRVH. Lys-257 is covalently cross-linked (Glycyl lysine isopeptide (Lys-Gly) (interchain with G-Cter in SUMO2)).

The protein belongs to the krueppel C2H2-type zinc-finger protein family. In terms of tissue distribution, expressed in the organ of Corti, stria vascularis, auditory nerve and retina. Lower levels in the tongue, cerebellum, small intestine and kidney.

It is found in the nucleus. May be involved in transcriptional regulation. The chain is Zinc finger protein 664 (ZNF664) from Cavia porcellus (Guinea pig).